A 429-amino-acid polypeptide reads, in one-letter code: Phosphoribosylamine--glycine ligase (429 aa).

Residues 109-316 form the ATP-grasp domain; it reads KDFLARHNIP…LVELCLAACE (208 aa). Residue 135–196 coordinates ATP; the sequence is LREKGAPIVI…EEFLDGEEAS (62 aa). The segment at 212–237 is disordered; that stretch reads SQDHKRVGDKDTGPNTGGMGAYSPAP. The span at 213–223 shows a compositional bias: basic and acidic residues; that stretch reads QDHKRVGDKDT. Mg(2+) is bound by residues Glu286 and Asn288.

It belongs to the GARS family. In terms of assembly, monomer. The cofactor is Mg(2+). Mn(2+) is required as a cofactor.

It catalyses the reaction 5-phospho-beta-D-ribosylamine + glycine + ATP = N(1)-(5-phospho-beta-D-ribosyl)glycinamide + ADP + phosphate + H(+). The protein operates within purine metabolism; IMP biosynthesis via de novo pathway; N(1)-(5-phospho-D-ribosyl)glycinamide from 5-phospho-alpha-D-ribose 1-diphosphate: step 2/2. This is Phosphoribosylamine--glycine ligase from Escherichia coli O157:H7.